The chain runs to 553 residues: CTP synthase (553 aa).

The amidoligase domain stretch occupies residues 1-270 (MTKYVFVTGG…DELICEELKL (270 aa)). CTP is bound at residue Ser-13. Ser-13 serves as a coordination point for UTP. ATP-binding positions include 14 to 19 (SLGKGI) and Asp-71. Mg(2+) contacts are provided by Asp-71 and Glu-144. Residues 151–153 (DIE), 191–196 (KTKPTQ), and Lys-227 contribute to the CTP site. Residues 191 to 196 (KTKPTQ) and Lys-227 contribute to the UTP site. The region spanning 295–547 (TIGMVGKYVE…VEAARAHHEA (253 aa)) is the Glutamine amidotransferase type-1 domain. Gly-356 provides a ligand contact to L-glutamine. The Nucleophile; for glutamine hydrolysis role is filled by Cys-383. L-glutamine contacts are provided by residues 384–387 (LGMQ), Glu-407, and Arg-473. Residues His-520 and Glu-522 contribute to the active site.

Belongs to the CTP synthase family. As to quaternary structure, homotetramer.

It catalyses the reaction UTP + L-glutamine + ATP + H2O = CTP + L-glutamate + ADP + phosphate + 2 H(+). It carries out the reaction L-glutamine + H2O = L-glutamate + NH4(+). The enzyme catalyses UTP + NH4(+) + ATP = CTP + ADP + phosphate + 2 H(+). It participates in pyrimidine metabolism; CTP biosynthesis via de novo pathway; CTP from UDP: step 2/2. Allosterically activated by GTP, when glutamine is the substrate; GTP has no effect on the reaction when ammonia is the substrate. The allosteric effector GTP functions by stabilizing the protein conformation that binds the tetrahedral intermediate(s) formed during glutamine hydrolysis. Inhibited by the product CTP, via allosteric rather than competitive inhibition. Catalyzes the ATP-dependent amination of UTP to CTP with either L-glutamine or ammonia as the source of nitrogen. Regulates intracellular CTP levels through interactions with the four ribonucleotide triphosphates. This chain is CTP synthase, found in Paraburkholderia phymatum (strain DSM 17167 / CIP 108236 / LMG 21445 / STM815) (Burkholderia phymatum).